A 264-amino-acid chain; its full sequence is Methionine aminopeptidase (264 aa).

Histidine 79 provides a ligand contact to substrate. A divalent metal cation contacts are provided by aspartate 97, aspartate 108, and histidine 171. Histidine 178 contributes to the substrate binding site. A divalent metal cation is bound by residues glutamate 204 and glutamate 235.

The protein belongs to the peptidase M24A family. Methionine aminopeptidase type 1 subfamily. In terms of assembly, monomer. Co(2+) serves as cofactor. Requires Zn(2+) as cofactor. Mn(2+) is required as a cofactor. The cofactor is Fe(2+).

The enzyme catalyses Release of N-terminal amino acids, preferentially methionine, from peptides and arylamides.. In terms of biological role, removes the N-terminal methionine from nascent proteins. The N-terminal methionine is often cleaved when the second residue in the primary sequence is small and uncharged (Met-Ala-, Cys, Gly, Pro, Ser, Thr, or Val). Requires deformylation of the N(alpha)-formylated initiator methionine before it can be hydrolyzed. This chain is Methionine aminopeptidase, found in Buchnera aphidicola subsp. Acyrthosiphon pisum (strain APS) (Acyrthosiphon pisum symbiotic bacterium).